Consider the following 98-residue polypeptide: NADH-ubiquinone oxidoreductase chain 4L (98 aa).

3 helical membrane passes run 1–21, 29–49, and 61–81; these read MTLI…GLLM, ALLC…LTIL, and IILL…LVMV.

The protein belongs to the complex I subunit 4L family. Core subunit of respiratory chain NADH dehydrogenase (Complex I) which is composed of 45 different subunits.

The protein localises to the mitochondrion inner membrane. It catalyses the reaction a ubiquinone + NADH + 5 H(+)(in) = a ubiquinol + NAD(+) + 4 H(+)(out). Core subunit of the mitochondrial membrane respiratory chain NADH dehydrogenase (Complex I) which catalyzes electron transfer from NADH through the respiratory chain, using ubiquinone as an electron acceptor. Part of the enzyme membrane arm which is embedded in the lipid bilayer and involved in proton translocation. This chain is NADH-ubiquinone oxidoreductase chain 4L (MT-ND4L), found in Eschrichtius robustus (California gray whale).